The primary structure comprises 501 residues: NAD(P)H-quinone oxidoreductase subunit 2, chloroplastic (501 aa).

14 helical membrane passes run 15–35 (ILPECILIFSLLIILIIDLTF), 40–60 (TIWLYFISLTSLLISIIILLF), 82–102 (IFQSFIVFCSILCIPLSIEYI), 107–127 (MAIPEFLIFILTATVGGMFLC), 132–152 (LVTIFVSLECLSLCSYLLCGY), 167–187 (LLIGGTSSSILAYGFSWLYGL), 212–232 (TFIAFICILVGLAFKLSLVPF), 244–264 (PTPVVAFLSVTSKIAGLALAT), 278–298 (WKIFLEILAILSMILGNLVAI), 307–327 (LAYSSISQIGYILIGLITGDL), 333–353 (MTIYVFFYIFMNLGTFACIIL), 378–398 (FSLTLCLLSLGGLPPLTGFFG), 410–430 (GFYLLVFIALITSVISLYYYL), and 466–486 (FVMIFCVLGSTFLGIIINPIF).

It belongs to the complex I subunit 2 family. NDH is composed of at least 16 different subunits, 5 of which are encoded in the nucleus.

The protein localises to the plastid. It is found in the chloroplast thylakoid membrane. It catalyses the reaction a plastoquinone + NADH + (n+1) H(+)(in) = a plastoquinol + NAD(+) + n H(+)(out). It carries out the reaction a plastoquinone + NADPH + (n+1) H(+)(in) = a plastoquinol + NADP(+) + n H(+)(out). In terms of biological role, NDH shuttles electrons from NAD(P)H:plastoquinone, via FMN and iron-sulfur (Fe-S) centers, to quinones in the photosynthetic chain and possibly in a chloroplast respiratory chain. The immediate electron acceptor for the enzyme in this species is believed to be plastoquinone. Couples the redox reaction to proton translocation, and thus conserves the redox energy in a proton gradient. The protein is NAD(P)H-quinone oxidoreductase subunit 2, chloroplastic of Marchantia polymorpha (Common liverwort).